A 396-amino-acid polypeptide reads, in one-letter code: Tryptophan synthase beta chain (396 aa).

K86 carries the post-translational modification N6-(pyridoxal phosphate)lysine.

Belongs to the TrpB family. Tetramer of two alpha and two beta chains. Pyridoxal 5'-phosphate serves as cofactor.

The enzyme catalyses (1S,2R)-1-C-(indol-3-yl)glycerol 3-phosphate + L-serine = D-glyceraldehyde 3-phosphate + L-tryptophan + H2O. Its pathway is amino-acid biosynthesis; L-tryptophan biosynthesis; L-tryptophan from chorismate: step 5/5. In terms of biological role, the beta subunit is responsible for the synthesis of L-tryptophan from indole and L-serine. The protein is Tryptophan synthase beta chain of Erwinia tasmaniensis (strain DSM 17950 / CFBP 7177 / CIP 109463 / NCPPB 4357 / Et1/99).